We begin with the raw amino-acid sequence, 282 residues long: Stage 0 sporulation protein J (282 aa).

Residues glutamate 139–leucine 158 constitute a DNA-binding region (H-T-H motif).

Belongs to the ParB family.

It localises to the cytoplasm. The protein localises to the nucleoid. Functionally, required for the initiation of sporulation and for normal chromosome segregation. Antagonizes sporulation inhibition by Soj. It probably interacts with a specific DNA site and other proteins involved in partitioning and cell division, and antagonizes Soj in response to cell cycle events related to chromosome partitioning. The protein is Stage 0 sporulation protein J of Bacillus subtilis (strain 168).